A 139-amino-acid polypeptide reads, in one-letter code: S-adenosylmethionine decarboxylase proenzyme (139 aa).

S63 serves as the catalytic Schiff-base intermediate with substrate; via pyruvic acid. At S63 the chain carries Pyruvic acid (Ser); by autocatalysis. The active-site Proton acceptor; for processing activity is the H68. C83 acts as the Proton donor; for catalytic activity in catalysis.

Belongs to the prokaryotic AdoMetDC family. Type 1 subfamily. As to quaternary structure, heterotetramer of two alpha and two beta chains arranged as a dimer of alpha/beta heterodimers. It depends on pyruvate as a cofactor. Is synthesized initially as an inactive proenzyme. Formation of the active enzyme involves a self-maturation process in which the active site pyruvoyl group is generated from an internal serine residue via an autocatalytic post-translational modification. Two non-identical subunits are generated from the proenzyme in this reaction, and the pyruvate is formed at the N-terminus of the alpha chain, which is derived from the carboxyl end of the proenzyme. The post-translation cleavage follows an unusual pathway, termed non-hydrolytic serinolysis, in which the side chain hydroxyl group of the serine supplies its oxygen atom to form the C-terminus of the beta chain, while the remainder of the serine residue undergoes an oxidative deamination to produce ammonia and the pyruvoyl group blocking the N-terminus of the alpha chain.

The catalysed reaction is S-adenosyl-L-methionine + H(+) = S-adenosyl 3-(methylsulfanyl)propylamine + CO2. It participates in amine and polyamine biosynthesis; S-adenosylmethioninamine biosynthesis; S-adenosylmethioninamine from S-adenosyl-L-methionine: step 1/1. Functionally, catalyzes the decarboxylation of S-adenosylmethionine to S-adenosylmethioninamine (dcAdoMet), the propylamine donor required for the synthesis of the polyamines spermine and spermidine from the diamine putrescine. The polypeptide is S-adenosylmethionine decarboxylase proenzyme (Pyrococcus furiosus (strain ATCC 43587 / DSM 3638 / JCM 8422 / Vc1)).